A 630-amino-acid polypeptide reads, in one-letter code: tRNA uridine 5-carboxymethylaminomethyl modification enzyme MnmG (630 aa).

Gly13–Gly18 provides a ligand contact to FAD. Position 273 to 287 (Gly273 to Phe287) interacts with NAD(+).

The protein belongs to the MnmG family. As to quaternary structure, homodimer. Heterotetramer of two MnmE and two MnmG subunits. FAD is required as a cofactor.

Its subcellular location is the cytoplasm. Its function is as follows. NAD-binding protein involved in the addition of a carboxymethylaminomethyl (cmnm) group at the wobble position (U34) of certain tRNAs, forming tRNA-cmnm(5)s(2)U34. The chain is tRNA uridine 5-carboxymethylaminomethyl modification enzyme MnmG from Pseudomonas putida (strain W619).